A 185-amino-acid polypeptide reads, in one-letter code: MAVEKDQQKDAEAEGLSAATLLPKLIPSGAGREWLERRRATIRSWGSFVDQRRFSRPRNLGELCQRLVRNVEYYQSNYVFVFLGLILYCVATSPMLLVALAVFFGACYILYLRTLQSKFVLFGREVSPAHQYALAGGVSFPFFWLAGAGSAVFWVLGATLVVIGSHAAFHQIEAVDGEELQMEPV.

At 1-78 (MAVEKDQQKD…RNVEYYQSNY (78 aa)) the chain is on the cytoplasmic side. The interval 30 to 54 (AGREWLERRRATIRSWGSFVDQRRF) is required for interaction with prenylated RAB3A and VAMP2. 2 helical membrane passes run 79–94 (VFVF…ATSP) and 95–112 (MLLV…ILYL). Residues 113–131 (RTLQSKFVLFGREVSPAHQ) are Cytoplasmic-facing. 2 helical membrane passes run 132–148 (YALA…LAGA) and 149–165 (GSAV…VIGS). A required for interaction with GDI1 region spans residues 165-185 (SHAAFHQIEAVDGEELQMEPV). The Cytoplasmic portion of the chain corresponds to 166–185 (HAAFHQIEAVDGEELQMEPV). Residues 175–185 (VDGEELQMEPV) are required for interaction with prenylated RAB3A and VAMP2. The homodimerization stretch occupies residues 175–185 (VDGEELQMEPV).

It belongs to the PRA1 family. Homodimer. Interacts with VAMP2 (synaptobrevin-2), prenylated Rab proteins, GDI1, NDRG1 and PCLO.

It localises to the cell membrane. The protein localises to the cytoplasm. Its subcellular location is the golgi apparatus. The protein resides in the cytoplasmic vesicle. It is found in the secretory vesicle. It localises to the synaptic vesicle. Its function is as follows. General Rab protein regulator required for vesicle formation from the Golgi complex. May control vesicle docking and fusion by mediating the action of Rab GTPases to the SNARE complexes. In addition it inhibits the removal of Rab GTPases from the membrane by GDI1. The protein is Prenylated Rab acceptor protein 1 (RABAC1) of Bos taurus (Bovine).